The primary structure comprises 354 residues: MGCTLSAEERAALERSKAIEKNLKEDGISAAKDVKLLLLGAGESGKSTIVKQMKIIHEDGFSGEDVKQYKPVVYSNTIQSLAAIVRAMDTLGVEYGDKERKADSKMVCDVVSRMEDTEPFSAELLSAMMRLWGDSGIQECFNRSREYQLNDSAKYYLDSLDRIGAADYQPTEQDILRTRVKTTGIVETHFTFKNLHFRLFDVGGQRSERKKWIHCFEDVTAIIFCVALSGYDQVLHEDETTNRMHESLMLFDSICNNKFFIDTSIILFLNKKDLFGEKIKKSPLTICFPEYPGSNTYEDAAAYIQTQFESKNRSPNKEIYCHMTCATDTNNIQVVFDAVTDIIIANNLRGCGLY.

Residue Gly-2 is the site of N-myristoyl glycine attachment. Cys-3 carries the S-palmitoyl cysteine lipid modification. Residues 32–354 enclose the G-alpha domain; sequence KDVKLLLLGA…ANNLRGCGLY (323 aa). The G1 motif stretch occupies residues 35-48; it reads KLLLLGAGESGKST. GTP contacts are provided by Glu-43, Lys-46, Ser-47, Thr-48, Ser-152, Leu-176, Arg-177, Thr-178, and Arg-179. Mg(2+) is bound at residue Ser-47. The G2 motif stretch occupies residues 174-182; it reads DILRTRVKT. A Mg(2+)-binding site is contributed by Thr-182. Residues 197-206 are G3 motif; it reads FRLFDVGGQR. Gln-205 bears the 5-glutamyl histamine mark. A G4 motif region spans residues 266-273; sequence ILFLNKKD. Positions 270, 273, and 325 each coordinate GTP. Residues 324 to 329 are G5 motif; sequence TCATDT. Asn-346 is subject to Deamidated asparagine; in form Alpha-3. The S-palmitoyl cysteine moiety is linked to residue Cys-351.

Belongs to the G-alpha family. G(i/o/t/z) subfamily. G proteins are composed of 3 units; alpha, beta and gamma. The alpha chain contains the guanine nucleotide binding site. Forms a complex with GNB1 and GNG3. Interacts with RGS14. Interacts with RGS16. Interacts with RGS19. Interacts (when palmitoylated) with ADGRG3. In terms of processing, deamidation of Asn-346 converts alpha-1 to alpha-3. Histaminylated at Gln-205 residues by TGM2.

It is found in the cell membrane. It localises to the membrane. It carries out the reaction GTP + H2O = GDP + phosphate + H(+). With respect to regulation, the GTPase activity is promoted by GTPAse activators, such as RGS14, RGS16 and RGS19. Functionally, guanine nucleotide-binding proteins (G proteins) function as transducers downstream of G protein-coupled receptors (GPCRs) in numerous signaling cascades. The alpha chain contains the guanine nucleotide binding site and alternates between an active, GTP-bound state and an inactive, GDP-bound state. Signaling by an activated GPCR promotes GDP release and GTP binding. The alpha subunit has a low GTPase activity that converts bound GTP to GDP, thereby terminating the signal. Both GDP release and GTP hydrolysis are modulated by numerous regulatory proteins. Signaling is mediated via effector proteins, such as adenylate cyclase. Inhibits adenylate cyclase activity, leading to decreased intracellular cAMP levels. This is Guanine nucleotide-binding protein G(o) subunit alpha (GNAO1) from Cricetulus longicaudatus (Long-tailed dwarf hamster).